The following is a 500-amino-acid chain: Cytochrome P450 2D14 (500 aa).

A heme-binding site is contributed by Cys446.

The protein belongs to the cytochrome P450 family. Heme serves as cofactor.

It is found in the endoplasmic reticulum membrane. The protein resides in the microsome membrane. It carries out the reaction an organic molecule + reduced [NADPH--hemoprotein reductase] + O2 = an alcohol + oxidized [NADPH--hemoprotein reductase] + H2O + H(+). Cytochromes P450 are a group of heme-thiolate monooxygenases. In liver microsomes, this enzyme is involved in an NADPH-dependent electron transport pathway. It oxidizes a variety of structurally unrelated compounds, including steroids, fatty acids, and xenobiotics. This is Cytochrome P450 2D14 (CYP2D14) from Bos taurus (Bovine).